We begin with the raw amino-acid sequence, 296 residues long: 4-hydroxybenzoate octaprenyltransferase (296 aa).

A run of 8 helical transmembrane segments spans residues 28-48 (PIGIYLLLWPTLWAVWIAGKG), 52-72 (LKTVFIFVVGVFLMRAAGCVI), 102-122 (ALALFAVLVGLSFVLVLFTNA), 146-166 (YYPQVVLGAAFSWGMPMAFTA), 169-189 (GDLPAAAWLLYIANLLWTVGY), 219-239 (VIILTLQGLALGCLMLAGARF), 241-261 (LGACFYIGLLAAAGCFAWEFW), and 275-295 (FLHNHWAGLAIFLGIVADYAV).

The protein belongs to the UbiA prenyltransferase family. Mg(2+) is required as a cofactor.

Its subcellular location is the cell inner membrane. It carries out the reaction all-trans-octaprenyl diphosphate + 4-hydroxybenzoate = 4-hydroxy-3-(all-trans-octaprenyl)benzoate + diphosphate. Its pathway is cofactor biosynthesis; ubiquinone biosynthesis. In terms of biological role, catalyzes the prenylation of para-hydroxybenzoate (PHB) with an all-trans polyprenyl group. Mediates the second step in the final reaction sequence of ubiquinone-8 (UQ-8) biosynthesis, which is the condensation of the polyisoprenoid side chain with PHB, generating the first membrane-bound Q intermediate 3-octaprenyl-4-hydroxybenzoate. This is 4-hydroxybenzoate octaprenyltransferase from Pseudomonas savastanoi pv. phaseolicola (strain 1448A / Race 6) (Pseudomonas syringae pv. phaseolicola (strain 1448A / Race 6)).